The sequence spans 175 residues: Phosphopantetheine adenylyltransferase (175 aa).

Residue Ser-10 participates in substrate binding. ATP-binding positions include 10 to 11 and His-18; that span reads SF. Lys-42, Leu-74, and Arg-88 together coordinate substrate. Residues 89–91, Glu-99, and 124–130 contribute to the ATP site; these read GMR and WIFTSSS.

The protein belongs to the bacterial CoaD family. As to quaternary structure, homohexamer. Mg(2+) serves as cofactor.

Its subcellular location is the cytoplasm. It carries out the reaction (R)-4'-phosphopantetheine + ATP + H(+) = 3'-dephospho-CoA + diphosphate. Its pathway is cofactor biosynthesis; coenzyme A biosynthesis; CoA from (R)-pantothenate: step 4/5. In terms of biological role, reversibly transfers an adenylyl group from ATP to 4'-phosphopantetheine, yielding dephospho-CoA (dPCoA) and pyrophosphate. The sequence is that of Phosphopantetheine adenylyltransferase from Desulfatibacillum aliphaticivorans.